The primary structure comprises 476 residues: Chromosomal replication initiator protein DnaA (476 aa).

The domain I, interacts with DnaA modulators stretch occupies residues 1–87 (MSESSHVGLW…LMYNVLVDKS (87 aa)). A domain II region spans residues 87-130 (SSGATVNQESTTRSTAIPQSGLPRVDERKAPGLLRAPAVQDLDP). Positions 131–348 (HLNPNYNFET…GIVISIMAHS (218 aa)) are domain III, AAA+ region. Gly-176, Gly-178, Lys-179, and Thr-180 together coordinate ATP. The tract at residues 349–476 (TIYNKEIDLD…KKRNVSNGER (128 aa)) is domain IV, binds dsDNA.

It belongs to the DnaA family. As to quaternary structure, oligomerizes as a right-handed, spiral filament on DNA at oriC.

The protein localises to the cytoplasm. Functionally, plays an essential role in the initiation and regulation of chromosomal replication. ATP-DnaA binds to the origin of replication (oriC) to initiate formation of the DNA replication initiation complex once per cell cycle. Binds the DnaA box (a 9 base pair repeat at the origin) and separates the double-stranded (ds)DNA. Forms a right-handed helical filament on oriC DNA; dsDNA binds to the exterior of the filament while single-stranded (ss)DNA is stabiized in the filament's interior. The ATP-DnaA-oriC complex binds and stabilizes one strand of the AT-rich DNA unwinding element (DUE), permitting loading of DNA polymerase. After initiation quickly degrades to an ADP-DnaA complex that is not apt for DNA replication. Binds acidic phospholipids. This is Chromosomal replication initiator protein DnaA from Bacteroides fragilis (strain YCH46).